A 508-amino-acid chain; its full sequence is MGLPWYRVHTVVLNDPGRLLSVHIMHTALVAGWAGSMALYELAVFDPSDPVLDPMWRQGMFVIPFMTRLGITNSWGGWSITGGTITNPGIWSYEGVAGAHIVFSGLCFLAAIWHWVYWDLEIFSDERTGKPSLDLPKIFGIHLFLAGVACFGFGAFHVTGLYGPGIWVSDPYGLTGKVQAVNPSWGVEGFDPFVPGGIASHHIAAGTLGILAGLFHLSVRPPQRLYKGLRMGNIETVLSSSIAAVFFAAFVVAGTMWYGSATTPIELFGPTRYQWDQGYFQQEIYRRVSAGLAENQSLSEAWSKIPEKLAFYDYIGNNPAKGGLFRAGSMDNGDGIAVGWLGHPIFRDKEGRELFVRRMPTFFETFPVVLVDGDGIVRADVPFRRAESKYSVEQVGVTVEFYGGELNGVSYSDPVTVKKYARRAQLGEIFELDRATLKSDGVFRSSPRGWFTFGHASFALLFFFGHIWHGARTLFRDVFAGIDPDLDAQVEFGAFQKLGDPTTRRQIG.

A run of 6 helical transmembrane segments spans residues 21–36, 101–115, 140–156, 203–218, 237–252, and 457–472; these read SVHI…WAGS, IVFS…IWHW, GIHL…FGAF, IAAG…FHLS, VLSS…AFVV, and SFAL…HGAR.

Belongs to the PsbB/PsbC family. PsbB subfamily. As to quaternary structure, PSII is composed of 1 copy each of membrane proteins PsbA, PsbB, PsbC, PsbD, PsbE, PsbF, PsbH, PsbI, PsbJ, PsbK, PsbL, PsbM, PsbT, PsbX, PsbY, PsbZ, Psb30/Ycf12, at least 3 peripheral proteins of the oxygen-evolving complex and a large number of cofactors. It forms dimeric complexes. Binds multiple chlorophylls. PSII binds additional chlorophylls, carotenoids and specific lipids. is required as a cofactor.

The protein localises to the plastid. It localises to the chloroplast thylakoid membrane. Its function is as follows. One of the components of the core complex of photosystem II (PSII). It binds chlorophyll and helps catalyze the primary light-induced photochemical processes of PSII. PSII is a light-driven water:plastoquinone oxidoreductase, using light energy to abstract electrons from H(2)O, generating O(2) and a proton gradient subsequently used for ATP formation. The sequence is that of Photosystem II CP47 reaction center protein from Lactuca sativa (Garden lettuce).